The chain runs to 425 residues: Type II secretion system protein L (425 aa).

Over 1 to 273 the chain is Cytoplasmic; it reads MKIAGKWKRK…DKAWQNTLLP (273 aa). The chain crosses the membrane as a helical span at residues 274 to 290; it reads WRGVGIAFACYLLLVVA. At 291 to 425 the chain is on the periplasmic side; that stretch reads DAGWAHYQLY…EGRLTLRSQQ (135 aa).

The protein belongs to the GSP L family. In terms of assembly, type II secretion system is composed of four main components: the outer membrane complex, the inner membrane complex, the cytoplasmic secretion ATPase and the periplasm-spanning pseudopilus. Forms homodimers. Interacts with OutM/GspM. Interacts with OutE/GspE and OutF/GspF.

The protein localises to the cell inner membrane. Its function is as follows. Inner membrane component of the type II secretion system required for the energy-dependent secretion of extracellular factors such as proteases and toxins from the periplasm. Plays a role in the complex assembly and recruits OutM resulting in a stable complex in the inner membrane. Provides thus a link between the energy-providing OutE protein in the cytoplasm and the rest of the T2SS machinery. This is Type II secretion system protein L (outL) from Pectobacterium carotovorum subsp. carotovorum (Erwinia carotovora subsp. carotovora).